We begin with the raw amino-acid sequence, 447 residues long: Gustatory receptor family protein 3 (447 aa).

Over 1-69 (MTITASNTLE…HTHSSARNTM (69 aa)) the chain is Extracellular. Residues 70-90 (FKWPLTIYNYLTLAILTAATI) form a helical membrane-spanning segment. At 91–116 (RRISQIKQKSATNEEKDAAFHVLNPT) the chain is on the cytoplasmic side. The chain crosses the membrane as a helical span at residues 117–137 (FVLTLCHALLMFSGLAAGFLL). Over 138–171 (LKLQKQREKMYHVLDQGLGRNRNEEHDSHHFKLN) the chain is Extracellular. A helical membrane pass occupies residues 172-192 (KLFISISFSFAAALSFVQIAT). At 193-211 (KMRYLDLPDTPDLINRKIY) the chain is on the cytoplasmic side. Residues 212–232 (FVILEGYVIFIASSCISLVAI) form a helical membrane-spanning segment. The Extracellular segment spans residues 233 to 292 (LFFQLCRILQFSIGQLIEEMVPKEKEECPLPEQSLQQIHDVQIHYQEISNAKLYIEQNFS). Residues 293–313 (FSLFYTYGCCIPLTCLLGYIA) traverse the membrane as a helical segment. At 314–328 (FRNGIQADMAETFSV) the chain is on the cytoplasmic side. A helical membrane pass occupies residues 329–349 (AIWLTNTMLALMLFSIPAFMI). Topologically, residues 350–405 (AEEGDKLLTASFKMYHETLCEERDLLVLSQMSFLSFQMHATKLTLTAGNFFMMNRK) are extracellular. The chain crosses the membrane as a helical span at residues 406-426 (IMISLFSAIFTYFLILVQFDA). Residues 427–447 (EKERAGECNNQSRVLIVQPPV) are Cytoplasmic-facing.

It belongs to the insect chemoreceptor superfamily. Gustatory receptor (GR) family. In terms of tissue distribution, expressed in I2 pharyngeal neurons.

It is found in the membrane. Functionally, chemoreceptor involved in light-induced avoidance behavior. Probably acts as a molecular sensor in I2 pharyngeal neurons, required for the inhibition of feeding in response to light and hydrogen peroxide. Involved in circadian rhythms, probably by acting as a light sensor. In contrast to lite-1, does not act as a photoreceptor. In Caenorhabditis elegans, this protein is Gustatory receptor family protein 3.